The following is a 580-amino-acid chain: MAKRVVSPNPMLSLETENIAKMGTLTADSLGSMWNVFTKCAENLENGRRLENISWRLWYREAMMSDANDACQIACQESSVPDLSSSCDSINSTVESDAGHVVDSNSFNRIDNVSVNAPIVNEVSLQAPMKGGSHSSIVRPQAKRSSSRLLSTDAFSQFISSFSPPEKPSMKDLALFHGNKSPSSKETIPKVSNSNSSDTSTDDQAYLNVSVSENEHADRSIKTHSSAPPLNQQKSSTSVNDAVSKAIQLVKSTSDLGSLSTNTSSTAQKNKSRKPTKSFSDAVAAASRAKELEKEKLSKVTVTPDDSTSIIRGFDPRLPVLSTKNVSHEEKSHSVQDDKSKQLLKPNPTQPYFYLRGSFDTGHSASSSICSAAVDSESVNSADFPHRTVYDPLPTHAIAESISQENVIEDDDDDDDAWVSVDEAESPHFTKRSPAPYLSKSFRNSALSLLLSQDEKLQHDVRSASSAALNLPRDTDIKATPNLSQSGNINSDNSDLSNYPYNDYRVYRMSHCSSNSNKVLASEISESLRRDLLWERRQKAAMNSAVLRRQSSQSSGANDDKEVRNRKVVEKGFANDCSVW.

Disordered regions lie at residues 161 to 241 (SFSP…SVND), 256 to 281 (LGSL…SFSD), 325 to 345 (NVSH…QLLK), 472 to 495 (PRDT…DNSD), and 544 to 564 (SAVL…KEVR). Positions 192–203 (SNSNSSDTSTDD) are enriched in low complexity. Polar residues-rich tracts occupy residues 223–241 (THSS…SVND) and 256–269 (LGSL…TAQK). Residues 326–341 (VSHEEKSHSVQDDKSK) are compositionally biased toward basic and acidic residues. Positions 481 to 495 (PNLSQSGNINSDNSD) are enriched in polar residues.

This is an uncharacterized protein from Schizosaccharomyces pombe (strain 972 / ATCC 24843) (Fission yeast).